The sequence spans 1058 residues: Gem-associated protein 4 (1058 aa).

Methionine 1 is subject to N-acetylmethionine. Threonine 84 carries the phosphothreonine modification. Phosphoserine is present on residues serine 86 and serine 205. The tract at residues leucine 714 to leucine 735 is leucine-zipper.

Part of the core SMN complex that contains SMN1, GEMIN2/SIP1, DDX20/GEMIN3, GEMIN4, GEMIN5, GEMIN6, GEMIN7, GEMIN8 and STRAP/UNRIP. Part of the SMN-Sm complex that contains SMN1, GEMIN2/SIP1, DDX20/GEMIN3, GEMIN4, GEMIN5, GEMIN6, GEMIN7, GEMIN8, STRAP/UNRIP and the Sm proteins SNRPB, SNRPD1, SNRPD2, SNRPD3, SNRPE, SNRPF and SNRPG. Interacts with GEMIN3; the interaction is direct. Interacts with GEMIN5. Interacts with GEMIN8; the interaction is direct. Interacts with several snRNP SM core proteins, including SNRPB, SNRPD1, SNRPD2, SNRPD3 and SNRPE. Interacts with PPP4R2.

It is found in the cytoplasm. The protein resides in the nucleus. The protein localises to the nucleolus. It localises to the gem. In terms of biological role, the SMN complex catalyzes the assembly of small nuclear ribonucleoproteins (snRNPs), the building blocks of the spliceosome, and thereby plays an important role in the splicing of cellular pre-mRNAs. Most spliceosomal snRNPs contain a common set of Sm proteins SNRPB, SNRPD1, SNRPD2, SNRPD3, SNRPE, SNRPF and SNRPG that assemble in a heptameric protein ring on the Sm site of the small nuclear RNA to form the core snRNP (Sm core). In the cytosol, the Sm proteins SNRPD1, SNRPD2, SNRPE, SNRPF and SNRPG are trapped in an inactive 6S pICln-Sm complex by the chaperone CLNS1A that controls the assembly of the core snRNP. To assemble core snRNPs, the SMN complex accepts the trapped 5Sm proteins from CLNS1A forming an intermediate. Binding of snRNA inside 5Sm triggers eviction of the SMN complex, thereby allowing binding of SNRPD3 and SNRPB to complete assembly of the core snRNP. In Homo sapiens (Human), this protein is Gem-associated protein 4 (GEMIN4).